The chain runs to 470 residues: Ribosomal protein uS12 methylthiotransferase RimO (470 aa).

The 117-residue stretch at 4 to 120 folds into the MTTase N-terminal domain; sequence TRVYLHTLGC…IARVVSDAQA (117 aa). Residues Cys-13, Cys-49, Cys-83, Cys-155, Cys-159, and Cys-162 each contribute to the [4Fe-4S] cluster site. Residues 141–371 form the Radical SAM core domain; the sequence is SLPSHTAYLK…MALQQEISRE (231 aa). The TRAM domain maps to 374–442; it reads RAMVGRRLEV…EYDLVGHVVA (69 aa). Residues 447–470 are disordered; that stretch reads RARRPLPAPAGGETPRRGGLPVVG.

It belongs to the methylthiotransferase family. RimO subfamily. Requires [4Fe-4S] cluster as cofactor.

It localises to the cytoplasm. The catalysed reaction is L-aspartate(89)-[ribosomal protein uS12]-hydrogen + (sulfur carrier)-SH + AH2 + 2 S-adenosyl-L-methionine = 3-methylsulfanyl-L-aspartate(89)-[ribosomal protein uS12]-hydrogen + (sulfur carrier)-H + 5'-deoxyadenosine + L-methionine + A + S-adenosyl-L-homocysteine + 2 H(+). Its function is as follows. Catalyzes the methylthiolation of an aspartic acid residue of ribosomal protein uS12. The sequence is that of Ribosomal protein uS12 methylthiotransferase RimO from Anaeromyxobacter sp. (strain Fw109-5).